The following is a 93-amino-acid chain: Small ribosomal subunit protein bS20 (93 aa).

Positions 1-18 (MPLHKSAEKRLRQSEKRN) are enriched in basic and acidic residues. Residues 1–25 (MPLHKSAEKRLRQSEKRNARNRARK) form a disordered region.

This sequence belongs to the bacterial ribosomal protein bS20 family.

Binds directly to 16S ribosomal RNA. In Chlorobium chlorochromatii (strain CaD3), this protein is Small ribosomal subunit protein bS20.